The chain runs to 530 residues: Capsid protein VP1 (530 aa).

Positions 1–20 (MMMASKDATSSVDGASGAGQ) are disordered. A shell domain region spans residues 1 to 225 (MMMASKDATS…FLFLVPPTVE (225 aa)). The segment at 226-278 (QKTRPFTLPNLPLSSLSNSRAPLPISSMGISPDNVQSVQFQNGRCTLDGRLVG) is P1 sub-domain 1. The protruding domain stretch occupies residues 226-530 (QKTRPFTLPN…SARGRLGLRR (305 aa)). The tract at residues 279 to 405 (TTPVSLSHVA…GSSITEATHL (127 aa)) is P2 sub-domain. Residues 406–530 (APSVYPPGFG…SARGRLGLRR (125 aa)) are P1 sub-domain 2. The tract at residues 523 to 530 (RGRLGLRR) is plays a role in binding to host histo-blood group structures antigens and in the formation of P-particles.

The protein belongs to the caliciviridae capsid protein family. As to quaternary structure, homodimer. Homomultimer. Interacts with the minor capsid protein VP2. Interacts (via C-terminus) with host type I histo-blood group structures antigens at the surface of target cells. May be cleaved by host protease to generate soluble capsid protein. Assembled capsid cannot be cleaved.

The protein localises to the virion. Its subcellular location is the host cytoplasm. Functionally, capsid protein self assembles to form an icosahedral capsid with a T=3 symmetry, about 38 nm in diameter, and consisting of 180 capsid proteins. A smaller form of capsid with a diameter of 23 nm might be capsid proteins assembled as icosahedron with T=1 symmetry. The capsid encapsulates the genomic RNA and is decorated with VP2 proteins. Attaches virion to target cells by binding histo-blood group antigens (HBGAs) present on gastroduodenal epithelial cells. In terms of biological role, the soluble capsid protein may play a role in viral immunoevasion. This chain is Capsid protein VP1, found in Norovirus (strain Human/NoV/United States/Norwalk/1968/GI) (Hu/NV/NV/1968/US).